The primary structure comprises 215 residues: Riboflavin synthase (215 aa).

2 Lumazine-binding repeats span residues 1–96 (MFTG…FGGH) and 97–193 (FVSG…YRFL). 2,4-dihydroxypteridine-binding positions include 4-6 (GII), 47-49 (CLT), 61-66 (DVMPET), 100-102 (GHV), K135, 144-146 (SLT), and 158-163 (SLIPHT).

Homotrimer. Can interact with 6,7-dimethyl-8-ribityllumazine synthase, forming a lumazine synthase/riboflavin synthase complex, also designated as 'heavy riboflavin synthase complex', which consists of a trimer of riboflavin synthase enclosed within an icosahedral structure composed of 60 subunits of 6,7-dimethyl-8-ribityllumazine synthase.

The catalysed reaction is 2 6,7-dimethyl-8-(1-D-ribityl)lumazine + H(+) = 5-amino-6-(D-ribitylamino)uracil + riboflavin. Its pathway is cofactor biosynthesis; riboflavin biosynthesis; riboflavin from 2-hydroxy-3-oxobutyl phosphate and 5-amino-6-(D-ribitylamino)uracil: step 2/2. Its activity is regulated as follows. Is activated by sulfite ions. Catalyzes the dismutation of two molecules of 6,7-dimethyl-8-ribityllumazine, resulting in the formation of riboflavin and 5-amino-6-(D-ribitylamino)uracil. In Bacillus subtilis (strain 168), this protein is Riboflavin synthase (ribE).